The sequence spans 236 residues: Uridylate kinase (236 aa).

K12–G15 serves as a coordination point for ATP. The tract at residues G20–G25 is involved in allosteric activation by GTP. Residue G54 participates in UMP binding. G55 and R59 together coordinate ATP. UMP-binding positions include D72 and T133–T140. N161, Y166, and D169 together coordinate ATP.

Belongs to the UMP kinase family. As to quaternary structure, homohexamer.

It localises to the cytoplasm. It catalyses the reaction UMP + ATP = UDP + ADP. Its pathway is pyrimidine metabolism; CTP biosynthesis via de novo pathway; UDP from UMP (UMPK route): step 1/1. With respect to regulation, allosterically activated by GTP. Inhibited by UTP. Functionally, catalyzes the reversible phosphorylation of UMP to UDP. In Alkaliphilus oremlandii (strain OhILAs) (Clostridium oremlandii (strain OhILAs)), this protein is Uridylate kinase.